The chain runs to 142 residues: Large ribosomal subunit protein uL13 (142 aa).

It belongs to the universal ribosomal protein uL13 family. In terms of assembly, part of the 50S ribosomal subunit.

Its function is as follows. This protein is one of the early assembly proteins of the 50S ribosomal subunit, although it is not seen to bind rRNA by itself. It is important during the early stages of 50S assembly. This is Large ribosomal subunit protein uL13 from Francisella tularensis subsp. mediasiatica (strain FSC147).